A 282-amino-acid chain; its full sequence is Probable iron transport system membrane protein HI_0360 (282 aa).

8 helical membrane-spanning segments follow: residues 17–37 (AMIL…YLML), 63–83 (LPYA…ILWI), 93–113 (AVIG…VSLN), 140–160 (IIIG…LLIF), 164–184 (TQAI…FTLL), 186–206 (ACVV…MVVT), 223–243 (IIAI…SYYL), and 245–265 (GATG…AFLF).

The protein belongs to the ABC-3 integral membrane protein family.

The protein resides in the cell inner membrane. Its function is as follows. Part of an ATP-driven transport system HI_0359/HI_0360/HI_0361/HI_0362 for iron. In Haemophilus influenzae (strain ATCC 51907 / DSM 11121 / KW20 / Rd), this protein is Probable iron transport system membrane protein HI_0360.